The primary structure comprises 406 residues: Probable endo-xylogalacturonan hydrolase A (406 aa).

Positions 1–18 (MLYYRNLALLSLLSLSSA) are cleaved as a signal peptide. 4 PbH1 repeats span residues 183 to 213 (AKDVTFTNLRMDATSRSDNPPKNTDGFDIGS), 214 to 235 (STHVTISSVSVSNDDDCVALKP), 237 to 257 (CNYVTVENVTCTGSHGISVGS), and 299 to 320 (VKNVTFSDFNVRGCDYAFQIQS). The active-site Proton donor is the Asp228. Asn244 carries N-linked (GlcNAc...) asparagine glycosylation. The active site involves His251. Asn301 is a glycosylation site (N-linked (GlcNAc...) asparagine).

This sequence belongs to the glycosyl hydrolase 28 family.

It localises to the secreted. Pectinolytic enzyme involved in the degradation of xylogalacturonan (xga), a galacturonan backbone heavily substituted with xylose, and which is one important component of the hairy regions of pectin. Activity requires a galacturonic acid backbone substituted with xylose. The protein is Probable endo-xylogalacturonan hydrolase A (xghA) of Neosartorya fischeri (strain ATCC 1020 / DSM 3700 / CBS 544.65 / FGSC A1164 / JCM 1740 / NRRL 181 / WB 181) (Aspergillus fischerianus).